We begin with the raw amino-acid sequence, 140 residues long: MSKMRVEVVSTEQLIFSGEAEFVVAPATEGEIGVYPQHVPLLTRIKPGVLRLKVPGTKEEVLVAVSGGMMEVQPSLITVLADTAIRGEDLDEARANEAKRAAEDALKHATDDMSTAKAHAALAVAIAELKTLDYLKKRAH.

This sequence belongs to the ATPase epsilon chain family. As to quaternary structure, F-type ATPases have 2 components, CF(1) - the catalytic core - and CF(0) - the membrane proton channel. CF(1) has five subunits: alpha(3), beta(3), gamma(1), delta(1), epsilon(1). CF(0) has three main subunits: a, b and c.

Its subcellular location is the cell inner membrane. In terms of biological role, produces ATP from ADP in the presence of a proton gradient across the membrane. The polypeptide is ATP synthase epsilon chain (Chromobacterium violaceum (strain ATCC 12472 / DSM 30191 / JCM 1249 / CCUG 213 / NBRC 12614 / NCIMB 9131 / NCTC 9757 / MK)).